The chain runs to 480 residues: Adenosylhomocysteinase (480 aa).

3 residues coordinate substrate: Thr63, Asp142, and Glu203. Thr204–Thr206 is an NAD(+) binding site. Substrate-binding residues include Lys233 and Asp237. NAD(+)-binding positions include Asn238, Gly267–Gly272, Glu290, Asn325, Ile346–His348, and Asn394.

This sequence belongs to the adenosylhomocysteinase family. It depends on NAD(+) as a cofactor.

Its subcellular location is the cytoplasm. The enzyme catalyses S-adenosyl-L-homocysteine + H2O = L-homocysteine + adenosine. The protein operates within amino-acid biosynthesis; L-homocysteine biosynthesis; L-homocysteine from S-adenosyl-L-homocysteine: step 1/1. May play a key role in the regulation of the intracellular concentration of adenosylhomocysteine. This chain is Adenosylhomocysteinase, found in Xanthomonas oryzae pv. oryzae (strain PXO99A).